The primary structure comprises 505 residues: Probable inorganic carbon transporter subunit DabB (505 aa).

Transmembrane regions (helical) follow at residues 9–29 (SLLT…LLFL), 37–57 (FVRI…LILA), 68–88 (WHLD…GFII), 105–123 (YFTL…WLSG), 162–182 (LFLL…HATG), 204–224 (TGIQ…WPFQ), 231–251 (IVAP…AGGI), 259–279 (LFHG…SVLI), 303–323 (GFML…HLIL), 355–375 (LWVM…WLTA), 382–402 (LISA…LVAF), 410–430 (IAGL…HHLF), and 446–466 (MSAV…GTWV).

The protein belongs to the inorganic carbon transporter (TC 9.A.2) DabB family. Forms a complex with DabA.

Its subcellular location is the cell membrane. Its function is as follows. Part of an energy-coupled inorganic carbon pump. The chain is Probable inorganic carbon transporter subunit DabB from Bacillus subtilis (strain 168).